Consider the following 242-residue polypeptide: Basic agglutinin (242 aa).

2 N-linked (GlcNAc...) asparagine glycosylation sites follow: Asn-45 and Asn-220.

It belongs to the leguminous lectin family.

In terms of biological role, lectin. This is Basic agglutinin (WBAI) from Psophocarpus tetragonolobus (Winged bean).